The following is a 323-amino-acid chain: Pseudouridylate synthase TRUB2, mitochondrial (323 aa).

The active-site Nucleophile is the D98. The tract at residues S302–L323 is disordered.

The protein belongs to the pseudouridine synthase TruB family. In terms of assembly, forms a regulatory protein-RNA complex, consisting of RCC1L, NGRN, RPUSD3, RPUSD4, TRUB2, FASTKD2 and 16S mt-rRNA.

The protein localises to the mitochondrion matrix. It carries out the reaction a uridine in mRNA = a pseudouridine in mRNA. It catalyses the reaction uridine(55) in tRNA = pseudouridine(55) in tRNA. Its function is as follows. Minor enzyme contributing to the isomerization of uridine to pseudouridine (pseudouridylation) of specific mitochondrial mRNAs (mt-mRNAs) such as COXI and COXIII mt-mRNAs. As a component of a functional protein-RNA module, consisting of RCC1L, NGRN, RPUSD3, RPUSD4, TRUB2, FASTKD2 and 16S mitochondrial ribosomal RNA (16S mt-rRNA), controls 16S mt-rRNA abundance and is required for intra-mitochondrial translation. Also catalyzes pseudouridylation of some tRNAs, including synthesis of pseudouridine(55) from uracil-55, in the psi GC loop of a subset of tRNAs. The polypeptide is Pseudouridylate synthase TRUB2, mitochondrial (Rattus norvegicus (Rat)).